The primary structure comprises 67 residues: Epsilon-conotoxin TxVA (67 aa).

The first 19 residues, 1–19, serve as a signal peptide directing secretion; that stretch reads MRCFPVFIILLLLIASAPC. A propeptide spanning residues 20–50 is cleaved from the precursor; that stretch reads FDARTKTDDDVPLSSLRDNLKRTIRTRLNIR. 4-carboxyglutamate occurs at positions 51 and 54. 2 disulfides stabilise this stretch: Cys-52-Cys-58 and Cys-53-Cys-59. Trp-57 carries the post-translational modification 6'-bromotryptophan. O-linked (GalNAc...) threonine glycosylation is present at Thr-60. Pro-63 carries the post-translational modification 4-hydroxyproline. Residues 64–67 constitute a propeptide that is removed on maturation; that stretch reads LTGR.

Post-translationally, O-glycan consists of the disaccharide Gal-GalNAc. As to expression, expressed by the venom duct.

It localises to the secreted. In terms of biological role, epsilon-conotoxins act at presynaptic membranes, blocking the calcium channels or G protein-coupled receptors. Causes hyperactivity upon intracranial injection into mice. Causes dorsal fins drooping in fish. The chain is Epsilon-conotoxin TxVA from Conus textile (Cloth-of-gold cone).